Consider the following 386-residue polypeptide: Homoserine O-succinyltransferase (386 aa).

An AB hydrolase-1 domain is found at 49–358 (NAILICHALS…DAEQGHDSFL (310 aa)). Residue serine 156 is the Nucleophile of the active site. Residue arginine 226 participates in substrate binding. Active-site residues include aspartate 321 and histidine 354. Residue aspartate 355 coordinates substrate.

Belongs to the AB hydrolase superfamily. MetX family. In terms of assembly, homodimer.

Its subcellular location is the cytoplasm. It catalyses the reaction L-homoserine + succinyl-CoA = O-succinyl-L-homoserine + CoA. Its pathway is amino-acid biosynthesis; L-methionine biosynthesis via de novo pathway; O-succinyl-L-homoserine from L-homoserine: step 1/1. Transfers a succinyl group from succinyl-CoA to L-homoserine, forming succinyl-L-homoserine. This chain is Homoserine O-succinyltransferase, found in Acinetobacter baumannii (strain SDF).